A 26-amino-acid polypeptide reads, in one-letter code: U1-poneritoxin-Ni1b (26 aa).

This sequence belongs to the non-disulfide-bridged peptide (NDBP) superfamily. Medium-length antimicrobial peptide (group 3) family. Ponericin-W subfamily. Expressed by the venom gland.

Its subcellular location is the secreted. The protein localises to the target cell membrane. In terms of biological role, has a broad spectrum of activity against both Gram-positive and Gram-negative bacteria and S.cerevisiae. Has insecticidal and hemolytic activities. May act by disrupting the integrity of the bacterial cell membrane. This chain is U1-poneritoxin-Ni1b, found in Neoponera inversa (Ant).